The sequence spans 296 residues: DNA repair protein complementing XP-A cells homolog (296 aa).

Over residues 1-10 the composition is skewed to polar residues; that stretch reads MSAEVSTNES. Residues 1-39 are disordered; the sequence is MSAEVSTNESAPPAEKKSKLTNAQKARIERNQAKAQKLR. Residues 26 to 39 are compositionally biased toward basic and acidic residues; sequence ARIERNQAKAQKLR. A Nuclear localization signal motif is present at residues 26–47; sequence ARIERNQAKAQKLREAKLVSHP. Residues Cys-126, Cys-129, Cys-147, and Cys-150 each contribute to the Zn(2+) site. Residues 126-150 fold into a zinc finger; that stretch reads CLECGDMFADSYLFNNFGHSVCDKC.

This sequence belongs to the XPA family. Strongly expressed in the central nervous system and muscles.

The protein resides in the nucleus. In terms of biological role, involved in DNA excision repair. Initiates repair by binding to damaged sites with various affinities, depending on the photoproduct and the transcriptional state of the region. The sequence is that of DNA repair protein complementing XP-A cells homolog (Xpac) from Drosophila melanogaster (Fruit fly).